The sequence spans 149 residues: Large ribosomal subunit protein bL9 (149 aa).

Belongs to the bacterial ribosomal protein bL9 family.

Binds to the 23S rRNA. The chain is Large ribosomal subunit protein bL9 from Haemophilus ducreyi (strain 35000HP / ATCC 700724).